The sequence spans 678 residues: Chloride channel protein ClC-Kb (678 aa).

Residues 1–50 lie on the Cytoplasmic side of the membrane; sequence MEELVGLREGSSGNPVALRELWSPCPRLRRGIRGGLEWLKQKLFRVGEDW. The next 2 membrane-spanning stretches (helical) occupy residues 51–82 and 91–111; these read YFLMTLGVLMALISYAMNFALGRVVRAHKWLY and LRYLSWTVYPVALVSFSSGFS. Residues 116-127 constitute an intramembrane region (helical); the sequence is PFSGGSGIPELK. Serine 121 serves as a coordination point for chloride. Helical transmembrane passes span 141-160 and 161-180; these read IKNFGAKVVGLSCTLATGST and LFLGKVGPFVHLSVMIAAYL. The helical intramembrane region spans 203–224; the sequence is AGAAVGVATVFAAPFSGVLFCI. A helical membrane pass occupies residues 236 to 255; it reads YWRGFFAATCGAFMFRLLAV. Ca(2+)-binding residues include glutamate 259, glutamate 261, aspartate 278, and glutamate 281. Helical transmembrane passes span 282–310 and 325–342; these read IFFFVLLGAICGVASCAYLYCQRTFLAFT and PLYAALAATVLASITYPP. An intramembrane region (helical) is located at residues 349–360; that stretch reads ASRLSMREHLDT. Residue asparagine 364 is glycosylated (N-linked (GlcNAc...) asparagine). 2 helical membrane-spanning segments follow: residues 400-420 and 421-440; these read GTLAFFLVMKFWMLILATTIP and MPAGYFLPIFIIGAAIGRLL. Phenylalanine 426 serves as a coordination point for chloride. An intramembrane region (helical) is located at residues 464–496; it reads GGYALAGAAAFSGAVTHSISTALLAFELTGQIV. The chain crosses the membrane as a helical span at residues 500 to 520; that stretch reads PVLMAVLAANAIAQSCQPSFY. Residues 521 to 678 lie on the Cytoplasmic side of the membrane; it reads DGTIMVKKLP…SWVERQHTGF (158 aa). CBS domains are found at residues 551–612 and 620–678; these read MRRA…ARAS and DILA…HTGF.

It belongs to the chloride channel (TC 2.A.49) family. CLCNKB subfamily. As to quaternary structure, homodimer. Interacts with BSND. Post-translationally, N-glycosylated. As to expression, expressed predominantly in the kidney.

The protein localises to the basolateral cell membrane. It catalyses the reaction chloride(in) = chloride(out). It carries out the reaction iodide(out) = iodide(in). The catalysed reaction is nitrate(in) = nitrate(out). The enzyme catalyses bromide(in) = bromide(out). Anion-selective channel permeable to small monovalent anions with ion selectivity for chloride &gt; bromide &gt; nitrate &gt; iodide. Forms a homodimeric channel where each subunit has its own ion conduction pathway. May conduct double-barreled currents controlled by two types of gates, two fast gates that control each subunit independently and a slow common gate that opens and shuts off both subunits simultaneously. Assembles with the regulatory subunit BSND/Barttin for sorting at the basolateral plasma membrane domain and functional switch to the ion conducting state. CLCNKB:BSND channels display mostly a linear current-voltage relationship controlled by common gate. Mediates chloride conductance along nephron segments, namely the thick ascending limb of Henle's loop, convoluted tubule and the collecting duct, contributing to the maintenance of systemic acid-base and electrolyte homeostasis. Conducts chloride currents in the stria vascularis of the inner ear to establish the endocochlear potential necessary for normal hearing. The polypeptide is Chloride channel protein ClC-Kb (CLCNKB) (Oryctolagus cuniculus (Rabbit)).